The following is a 373-amino-acid chain: MARWICFEDIELKKIRVVVVDDSALVRSLLAEIINRQKDMECVGTANDPLIAREMIRELNPDVLTLDIEMPRMDGIDFLGRLMRLRPMPVVMVSTLTERGAEITMKALELGAIDFVAKPRIGVASGLTELSDQIVEKVRIAATAHVRRAPAVPAAATPAVGGAVGGHAPVASIGRVSTEKLICIGASTGGTEAIKEILTRLPADSPGIVITQHMPPGFTTSFAARLNSLCQIAVQEAVNGERILPGHAYIAPGGKQFRVSRSGANYVALVEDGELVNRHKPSVEVLFKSVASVVGRNAYGVMLTGMGNDGAKAMREMKDAGSYNFVQDEASCIVFGMPREAILHGAADEVLPLTAIAPALIAKLSSATDRYRV.

Positions Arg16 to Gln133 constitute a Response regulatory domain. Asp67 bears the 4-aspartylphosphate mark. One can recognise a CheB-type methylesterase domain in the interval Arg175–Ala367. Residues Ser187, His213, and Asp309 contribute to the active site.

It belongs to the CheB family. Post-translationally, phosphorylated by CheA. Phosphorylation of the N-terminal regulatory domain activates the methylesterase activity.

The protein resides in the cytoplasm. The catalysed reaction is [protein]-L-glutamate 5-O-methyl ester + H2O = L-glutamyl-[protein] + methanol + H(+). It catalyses the reaction L-glutaminyl-[protein] + H2O = L-glutamyl-[protein] + NH4(+). Its function is as follows. Involved in chemotaxis. Part of a chemotaxis signal transduction system that modulates chemotaxis in response to various stimuli. Catalyzes the demethylation of specific methylglutamate residues introduced into the chemoreceptors (methyl-accepting chemotaxis proteins or MCP) by CheR. Also mediates the irreversible deamidation of specific glutamine residues to glutamic acid. The polypeptide is Protein-glutamate methylesterase/protein-glutamine glutaminase 1 (Albidiferax ferrireducens (strain ATCC BAA-621 / DSM 15236 / T118) (Rhodoferax ferrireducens)).